The primary structure comprises 501 residues: Tetrachloroethene reductive dehalogenase (501 aa).

The tat-type signal signal peptide spans methionine 1 to alanine 37. Corrinoid contacts are provided by residues alanine 74, tyrosine 207, asparagine 309 to serine 314, methionine 329 to cysteine 332, and valine 341 to leucine 343. The 4Fe-4S ferredoxin-type 1 domain occupies lysine 356–arginine 386. The [4Fe-4S] cluster site is built by cysteine 366, cysteine 369, cysteine 372, and cysteine 376. Residue histidine 394–glutamine 401 participates in corrinoid binding. Cysteine 409 provides a ligand contact to [4Fe-4S] cluster. Position 419 (tyrosine 419) interacts with corrinoid. [4Fe-4S] cluster is bound by residues cysteine 420, cysteine 423, and cysteine 427. The region spanning cysteine 420–glycine 439 is the 4Fe-4S ferredoxin-type 2 domain.

The protein belongs to the PceA family. In terms of assembly, monomer. The cofactor is [4Fe-4S] cluster. It depends on corrinoid as a cofactor. Predicted to be exported by the Tat system. The position of the signal peptide cleavage has not been experimentally proven.

The protein resides in the cytoplasm. It localises to the cell inner membrane. The catalysed reaction is trichloroethene + chloride + A + H(+) = tetrachloroethene + AH2. It carries out the reaction trichloroethene + AH2 = (Z)-1,2-dichloroethene + chloride + A + H(+). Both the processed and unprocessed enzymes are catalytically active. PCE-dependent growth and PceA activity are inhibited in the presence of high concentrations of 5,6-dimethylbenzimidazole (DMB), probably due to the formation a DMB-containing nor-B12 cofactor. Dechlorination of PCE is stimulated by ammonium ions. Activity is inhibited by chlorinated methanes. Functionally, catalyzes the reductive dechlorination of tetrachloroethene (PCE) to trichloroethene (TCE) and of trichloroethene to cis-1,2-dichloroethene (DCE). In addition, trans-1,3-dichloropropene, 1,1,3-trichloropropene and 2,3-dichloropropene are reduced to a mixture of mono-chloropropenes, 1,1-dichloropropene, and 2-chloropropene, respectively. Is also able to convert brominated phenols such as 4-bromophenol (4-BP), 2,4-dibromophenol (2,4-DBP) and 2,4,6-tribromophenol (2,4,6-TBP). Utilizes formate or pyruvate as electron donors. Titanium(III) citrate could also serve as electron donor. Reduced methyl viologen can act as the artificial electron donor. This is Tetrachloroethene reductive dehalogenase from Sulfurospirillum multivorans (Dehalospirillum multivorans).